Reading from the N-terminus, the 612-residue chain is Probable serine/threonine-protein kinase WNK4 (612 aa).

The 258-residue stretch at 25 to 282 folds into the Protein kinase domain; the sequence is IRYNEVLGRG…AKELLQDPFL (258 aa). Residues 105-108 and K155 each bind ATP; that span reads TELF. The Proton acceptor role is filled by D172.

It belongs to the protein kinase superfamily. Ser/Thr protein kinase family. WNK subfamily.

The catalysed reaction is L-seryl-[protein] + ATP = O-phospho-L-seryl-[protein] + ADP + H(+). It carries out the reaction L-threonyl-[protein] + ATP = O-phospho-L-threonyl-[protein] + ADP + H(+). This Oryza sativa subsp. japonica (Rice) protein is Probable serine/threonine-protein kinase WNK4 (WNK4).